The sequence spans 66 residues: Large ribosomal subunit protein uL29 (66 aa).

This sequence belongs to the universal ribosomal protein uL29 family.

This Lachnospira eligens (strain ATCC 27750 / DSM 3376 / VPI C15-48 / C15-B4) (Eubacterium eligens) protein is Large ribosomal subunit protein uL29.